Reading from the N-terminus, the 282-residue chain is Pantothenate synthetase (282 aa).

ATP is bound at residue methionine 30–histidine 37. The active-site Proton donor is the histidine 37. Glutamine 60 contacts (R)-pantoate. Beta-alanine is bound at residue glutamine 60. Glycine 146–aspartate 149 serves as a coordination point for ATP. Glutamine 152 is a binding site for (R)-pantoate. ATP contacts are provided by residues isoleucine 175 and lysine 183 to arginine 186.

The protein belongs to the pantothenate synthetase family. Homodimer.

It is found in the cytoplasm. The catalysed reaction is (R)-pantoate + beta-alanine + ATP = (R)-pantothenate + AMP + diphosphate + H(+). It participates in cofactor biosynthesis; (R)-pantothenate biosynthesis; (R)-pantothenate from (R)-pantoate and beta-alanine: step 1/1. Functionally, catalyzes the condensation of pantoate with beta-alanine in an ATP-dependent reaction via a pantoyl-adenylate intermediate. In Campylobacter jejuni subsp. jejuni serotype O:23/36 (strain 81-176), this protein is Pantothenate synthetase.